Here is a 356-residue protein sequence, read N- to C-terminus: GTPase Obg (356 aa).

An Obg domain is found at 1–158 (MFIDSVKITL…RLVRLELKLI (158 aa)). In terms of domain architecture, OBG-type G spans 159-339 (ADVGLVGFPN…LKFMLLEEIK (181 aa)). Residues 165-172 (GFPNVGKS), 190-194 (FTTLT), 212-215 (DIPG), 280-283 (SKSD), and 320-322 (SSL) each bind GTP. Residues S172 and T192 each coordinate Mg(2+).

Belongs to the TRAFAC class OBG-HflX-like GTPase superfamily. OBG GTPase family. Monomer. Mg(2+) is required as a cofactor.

The protein localises to the cytoplasm. Functionally, an essential GTPase which binds GTP, GDP and possibly (p)ppGpp with moderate affinity, with high nucleotide exchange rates and a fairly low GTP hydrolysis rate. Plays a role in control of the cell cycle, stress response, ribosome biogenesis and in those bacteria that undergo differentiation, in morphogenesis control. The protein is GTPase Obg of Campylobacter jejuni subsp. jejuni serotype O:23/36 (strain 81-176).